The sequence spans 326 residues: F-box/LRR-repeat protein 12 (326 aa).

Residues Met-1–Val-47 enclose the F-box domain. LRR repeat units lie at residues Leu-51–Gly-78, Ala-86–Val-111, Val-161–Gly-185, Thr-186–Gly-211, Cys-212–Thr-236, Val-237–Gly-261, and Pro-266–Gly-291.

As to quaternary structure, interacts with SKP1 and CUL1.

Its pathway is protein modification; protein ubiquitination. Substrate-recognition component of the SCF (SKP1-CUL1-F-box protein)-type E3 ubiquitin ligase complex. Mediates the polyubiquitination and proteasomal degradation of CAMK1 leading to disruption of cyclin D1/CDK4 complex assembly which results in G1 cell cycle arrest in lung epithelia. This chain is F-box/LRR-repeat protein 12 (FBXL12), found in Bos taurus (Bovine).